A 298-amino-acid chain; its full sequence is Calcium-binding protein 1 (298 aa).

The span at 1–10 (MSSHIAKSES) shows a compositional bias: basic and acidic residues. Residues 1-131 (MSSHIAKSES…APAGTPEADP (131 aa)) are disordered. Serine 2 is lipidated: N-myristoyl glycine. The S-palmitoyl cysteine moiety is linked to residue histidine 4. Residues 11–25 (KTSLLKAAAASGGSR) show a composition bias toward low complexity. EF-hand domains are found at residues 153–188 (EEIE…MGYM), 207–224 (GHVD…KLLA), 230–265 (IGVK…LLGH), and 267–298 (VGHR…MMSR). 5 residues coordinate Ca(2+): aspartate 166, aspartate 168, aspartate 170, tyrosine 172, and aspartate 177. Ca(2+) contacts are provided by aspartate 243, asparagine 245, aspartate 247, and glutamate 249. Position 251 is a phosphoserine (serine 251). The Ca(2+) site is built by glutamate 254, aspartate 280, asparagine 282, aspartate 284, arginine 286, and glutamate 291.

In terms of assembly, interacts with ITPR1, ITPR2 and ITPR3. The strength of this interaction inversely correlates with calcium concentration. Interacts with CACNA1A (via C-terminal CDB motif) in the pre- and postsynaptic membranes. Interacts with CACNA1C. Interacts with CACNA1D. Interacts (via EF-hands 1 and 2) at microtubules with MAP1LC3B. Interacts (via EF-hands 1 and 2) with NSMF (via the central NLS-containing motif region), the interaction occurs in a calcium dependent manner after synaptic NMDA receptor stimulation and prevents nuclear import of NSMF. Interacts with MYO1C and TRPC5. Interacts with SPACA9. In terms of processing, phosphorylated. The phosphorylation regulates the activity. In terms of tissue distribution, somatodendritic compartment of neurons. Restricted expression in retina to a subpopulation of amacrine, bipolar, and ganglion cells. According to PubMed:11906216, expression is heterogeneous within brain regions and their major cell types and does not match with those of marker proteins for characterized neuronal subpopulations. Isoform 2: Minor isoform expressed in the brain, in the granule cell layer of the cerebellum, at low level. Not developmentally regulated. Isoform 3: Minor isoform expressed in the brain, in the granule cell layer. of the cerebellum, at low level. Not developmentally regulated.

The protein localises to the cytoplasm. It is found in the cytoskeleton. Modulates calcium-dependent activity of inositol 1,4,5-triphosphate receptors (ITPRs). Inhibits agonist-induced intracellular calcium signaling. Enhances inactivation and does not support calcium-dependent facilitation of voltage-dependent P/Q-type calcium channels. Causes calcium-dependent facilitation and inhibits inactivation of L-type calcium channels by binding to the same sites as calmodulin in the C-terminal domain of CACNA1C, but has an opposite effect on channel function. Suppresses the calcium-dependent inactivation of CACNA1D. Inhibits TRPC5 channels. Prevents NMDA receptor-induced cellular degeneration. Required for the normal transfer of light signals through the retina. The sequence is that of Calcium-binding protein 1 (Cabp1) from Rattus norvegicus (Rat).